We begin with the raw amino-acid sequence, 225 residues long: Urease accessory protein UreF (225 aa).

It belongs to the UreF family. UreD, UreF and UreG form a complex that acts as a GTP-hydrolysis-dependent molecular chaperone, activating the urease apoprotein by helping to assemble the nickel containing metallocenter of UreC. The UreE protein probably delivers the nickel.

It localises to the cytoplasm. Required for maturation of urease via the functional incorporation of the urease nickel metallocenter. The protein is Urease accessory protein UreF of Thermosynechococcus vestitus (strain NIES-2133 / IAM M-273 / BP-1).